Consider the following 968-residue polypeptide: MPFALGQRWISDTESELGLGTVVQVEGRMVTVLFPATGENRMFSRAEAPLTRVIYNPGDSVESHEGWSLAVSELTEKDGIVIYHGIHSETGEQVTLRETLLNHNIRFNKPQDRLFAGQIDRLDRFGVRYQCQMLRHKLASSDLLGLQGPRVGLIPHQMWIAHEVGRRYAPRVLLADEVGLGKTIEAGLIIHQQLLTGRAERILIIVPDTLRHQWLVEMLRRFNLRFSVFDEDRCVEAYADHDNPFYTEQLVICSLELLRKKKRLDQALDADWDLLVVDEAHHLEWTEEAPSRAYQVVEALSEVIPGVLLLTATPDQLGHESHFARLRLLDPDRFYDYDAFLAEEDSYKDVAIAAEALAGNAKLPDAAINSLTELLGEKDISPSIRLIQAEGIDAEVQQAARSELLQELLDRHGTGRVLYRNSRASVKGFPKRFFNAYPHAMPDQYQTAARVSGMMGGHKSLEAKAAQALSPEKLYQEFEDNSASWWKFDPRVDWLIEFLKSHRSKKVLIIASQAETALSLEEALRTREGIQATVFHEGMSIIERDKAGAYFAQEEGGAQALICSEIGSEGRNFQFASHLVLFDLPLNPDLLEQRIGRLDRIGQKNDIQIHLPYLEDTAQERLMKWYHQGLNAFELTCPSGHVLYSEFAEDLLNVLVVDDSDELTNLLNHTQSRYKELKHTMEQGRDKLLEINSHGGEKAMAIVQRLAQNDGDTHLIGSVIRLWDIIGVDQEDKGENSIILRPSEHMMFPTYPGLPEDGVTVTFDRDTALSRDDIALITQEHPLVQTGLDLITGSETGTTSVAILKNKALPAGTLFLELIYMADASAPKSSQLYRYLPPTPIRVLLDKNGNDLSAKVDYASFDKQLSAVNRHIGGKLVTASQPILHPLFAKGEEYAQVVVDEMVAQAREKMTQQLSAELSRLESLKAVNPNIREEELEYLRNQMQELNTYLDASQLQLDAIRMVLVSHV.

In terms of domain architecture, Helicase ATP-binding spans 163–332; it reads EVGRRYAPRV…FARLRLLDPD (170 aa). 176–183 lines the ATP pocket; that stretch reads DEVGLGKT. The short motif at 278–281 is the DEAH box element; it reads DEAH. A Helicase C-terminal domain is found at 491 to 641; the sequence is RVDWLIEFLK…AFELTCPSGH (151 aa).

The protein belongs to the SNF2/RAD54 helicase family. RapA subfamily. Interacts with the RNAP. Has a higher affinity for the core RNAP than for the holoenzyme. Its ATPase activity is stimulated by binding to RNAP.

In terms of biological role, transcription regulator that activates transcription by stimulating RNA polymerase (RNAP) recycling in case of stress conditions such as supercoiled DNA or high salt concentrations. Probably acts by releasing the RNAP, when it is trapped or immobilized on tightly supercoiled DNA. Does not activate transcription on linear DNA. Probably not involved in DNA repair. The chain is RNA polymerase-associated protein RapA from Shewanella baltica (strain OS185).